A 287-amino-acid polypeptide reads, in one-letter code: MKNVLSIQSHVIYGHAGNSAAVFPMQRLGVNVWPLNTVQLSNHMQYGHWAGSAIDAAKMEQLVDGIAAIGALKRCDAVLSGFLGSPAQARAAVEIVRTVKATNPNAWYFCDPAMGQTGGIRPEPGVEEFIVAELPELADGMAPNHGELQKLAGQRIETVAEAVEACRSIIRRGPRLILVKHLHDRNSPADRFNMLVVTETEAWIGQRPLYAFPRHPVGVGDLTSAIFVARRLRGDSVRAAFEHTLAAVHAVVKATYDARRYELELVAAQDEIAQPSEWFGAWVTGAD.

Substrate is bound by residues Ser-9 and Met-44–Gln-45. 4 residues coordinate ATP: Asp-111, Ala-142, Glu-147, and Lys-180. Asp-221 contributes to the substrate binding site.

Belongs to the pyridoxine kinase family. PdxY subfamily. As to quaternary structure, homodimer. Mg(2+) serves as cofactor.

The catalysed reaction is pyridoxal + ATP = pyridoxal 5'-phosphate + ADP + H(+). It functions in the pathway cofactor metabolism; pyridoxal 5'-phosphate salvage; pyridoxal 5'-phosphate from pyridoxal: step 1/1. In terms of biological role, pyridoxal kinase involved in the salvage pathway of pyridoxal 5'-phosphate (PLP). Catalyzes the phosphorylation of pyridoxal to PLP. The chain is Pyridoxal kinase PdxY from Burkholderia thailandensis (strain ATCC 700388 / DSM 13276 / CCUG 48851 / CIP 106301 / E264).